A 513-amino-acid polypeptide reads, in one-letter code: Na(+)/H(+) antiporter NhaB (513 aa).

12 helical membrane-spanning segments follow: residues 23–43, 52–72, 97–117, 120–140, 144–164, 202–222, 238–258, 303–323, 348–368, 391–411, 447–467, and 475–495; these read LALI…PFVA, IFTL…LLAI, LLLM…LFIF, LLLS…AAAF, FLDA…FYGI, LMMH…VGEP, FFLR…LTCL, AIIG…VGLI, TESL…AVII, LFYI…VGTI, ATPN…APLI, and VWMA…CVEF.

The protein belongs to the NhaB Na(+)/H(+) (TC 2.A.34) antiporter family.

It is found in the cell inner membrane. The enzyme catalyses 2 Na(+)(in) + 3 H(+)(out) = 2 Na(+)(out) + 3 H(+)(in). In terms of biological role, na(+)/H(+) antiporter that extrudes sodium in exchange for external protons. The sequence is that of Na(+)/H(+) antiporter NhaB from Shigella sonnei (strain Ss046).